Here is a 1291-residue protein sequence, read N- to C-terminus: DNA-directed RNA polymerase subunit beta (1291 aa).

This sequence belongs to the RNA polymerase beta chain family. As to quaternary structure, the RNAP catalytic core consists of 2 alpha, 1 beta, 1 beta' and 1 omega subunit. When a sigma factor is associated with the core the holoenzyme is formed, which can initiate transcription.

It carries out the reaction RNA(n) + a ribonucleoside 5'-triphosphate = RNA(n+1) + diphosphate. In terms of biological role, DNA-dependent RNA polymerase catalyzes the transcription of DNA into RNA using the four ribonucleoside triphosphates as substrates. The sequence is that of DNA-directed RNA polymerase subunit beta from Mycoplasma mycoides subsp. mycoides SC (strain CCUG 32753 / NCTC 10114 / PG1).